The chain runs to 378 residues: Putative F-box protein At3g24580 (378 aa).

The F-box domain maps to Met1 to His47.

The polypeptide is Putative F-box protein At3g24580 (Arabidopsis thaliana (Mouse-ear cress)).